The sequence spans 67 residues: Bombesin (67 aa).

The signal sequence occupies residues 1 to 30 (MLLLSAVKTLLLAWLGIVLVFMSIIKSAML). Positions 31–49 (DFLQEAGKLEGIETYKKEA) are excised as a propeptide. Q50 is subject to Pyrrolidone carboxylic acid. M64 carries the methionine amide modification.

Expressed by the skin glands.

Its subcellular location is the secreted. Stimulates smooth muscle contraction in isolated rat stomach strip. The polypeptide is Bombesin (Rana shuchinae (Sichuan frog)).